The sequence spans 429 residues: Enolase (429 aa).

Gln-162 contacts (2R)-2-phosphoglycerate. The active-site Proton donor is Glu-204. Asp-241, Glu-286, and Asp-313 together coordinate Mg(2+). (2R)-2-phosphoglycerate-binding residues include Lys-338, Arg-367, Ser-368, and Lys-389. Lys-338 serves as the catalytic Proton acceptor.

The protein belongs to the enolase family. Mg(2+) serves as cofactor.

The protein resides in the cytoplasm. It is found in the secreted. It localises to the cell surface. The enzyme catalyses (2R)-2-phosphoglycerate = phosphoenolpyruvate + H2O. The protein operates within carbohydrate degradation; glycolysis; pyruvate from D-glyceraldehyde 3-phosphate: step 4/5. Its function is as follows. Catalyzes the reversible conversion of 2-phosphoglycerate (2-PG) into phosphoenolpyruvate (PEP). It is essential for the degradation of carbohydrates via glycolysis. The polypeptide is Enolase (Halalkalibacterium halodurans (strain ATCC BAA-125 / DSM 18197 / FERM 7344 / JCM 9153 / C-125) (Bacillus halodurans)).